A 151-amino-acid polypeptide reads, in one-letter code: MNDEFSRASEHIWKYFELHAQQRMTVFNFYIAITGLLAAGIGVTLQQGGKYVLFTSLMGVFVAFISFIFWKLDQRVSILIKNAEIALQDLECQFSNEKLRIITKDNSSNLLNLGISSSWTYGKCFRISFVIVGFTGILLAITPFLMKVSTS.

The next 3 helical transmembrane spans lie at 25-45, 52-72, and 127-147; these read TVFN…GVTL, VLFT…FWKL, and ISFV…FLMK.

Belongs to the Cap19 family.

The protein localises to the cell inner membrane. Functionally, membrane protein component of a CBASS (cyclic oligonucleotide-based antiphage signaling system) which provides immunity against bacteriophage. The CD-NTase protein synthesizes cyclic nucleotides in response to infection; these serve as specific second messenger signals. The signals activate a diverse range of effectors, leading to bacterial cell death and thus abortive phage infection. A type III CBASS system. Expression of this CBASS system (Cap17-CapW-CdnC-Cap7-Cap6-Cap18-Cap19) in a susceptible E.coli (strain JP313) confers resistance to bacteriophage lambda cI-. This is CD-NTase-associated protein 19 from Escherichia coli.